A 120-amino-acid chain; its full sequence is FK506-binding protein 1B (120 aa).

The segment at 1–24 is disordered; it reads MNPPQGVTKTILRPGNGRDSPHTG. The 97-residue stretch at 24–120 folds into the PPIase FKBP-type domain; it reads GDTVIIDYTG…LVLYVCSPAG (97 aa).

The protein belongs to the FKBP-type PPIase family. FKBP1 subfamily.

It carries out the reaction [protein]-peptidylproline (omega=180) = [protein]-peptidylproline (omega=0). Functionally, PPIases accelerate the folding of proteins. It catalyzes the cis-trans isomerization of proline imidic peptide bonds in oligopeptides. In Emericella nidulans (strain FGSC A4 / ATCC 38163 / CBS 112.46 / NRRL 194 / M139) (Aspergillus nidulans), this protein is FK506-binding protein 1B (FKBP3).